The following is a 612-amino-acid chain: Probable serine/threonine-protein kinase WNK4 (612 aa).

The Protein kinase domain occupies 25 to 282 (IRYNEVLGRG…AKELLQDPFL (258 aa)). ATP-binding positions include 105-108 (TELF) and Lys-155. The Proton acceptor role is filled by Asp-172.

Belongs to the protein kinase superfamily. Ser/Thr protein kinase family. WNK subfamily.

The enzyme catalyses L-seryl-[protein] + ATP = O-phospho-L-seryl-[protein] + ADP + H(+). It catalyses the reaction L-threonyl-[protein] + ATP = O-phospho-L-threonyl-[protein] + ADP + H(+). The polypeptide is Probable serine/threonine-protein kinase WNK4 (WNK4) (Oryza sativa subsp. japonica (Rice)).